We begin with the raw amino-acid sequence, 542 residues long: CTP synthase (542 aa).

An amidoligase domain region spans residues 1-265 (MTRYIFVTGG…DDFVVERFGL (265 aa)). CTP is bound at residue Ser13. Ser13 contacts UTP. ATP is bound by residues 14–19 (SLGKGI) and Asp71. Mg(2+) contacts are provided by Asp71 and Glu139. Residues 146–148 (DIE), 186–191 (KTKPTQ), and Lys222 contribute to the CTP site. UTP-binding positions include 186-191 (KTKPTQ) and Lys222. Residues 290–541 (TIAMVGKYME…VKAALAQKNK (252 aa)) form the Glutamine amidotransferase type-1 domain. Gly351 provides a ligand contact to L-glutamine. Cys378 (nucleophile; for glutamine hydrolysis) is an active-site residue. L-glutamine is bound by residues 379–382 (LGMQ), Glu402, and Arg469. Catalysis depends on residues His514 and Glu516.

This sequence belongs to the CTP synthase family. In terms of assembly, homotetramer.

It carries out the reaction UTP + L-glutamine + ATP + H2O = CTP + L-glutamate + ADP + phosphate + 2 H(+). It catalyses the reaction L-glutamine + H2O = L-glutamate + NH4(+). The catalysed reaction is UTP + NH4(+) + ATP = CTP + ADP + phosphate + 2 H(+). It functions in the pathway pyrimidine metabolism; CTP biosynthesis via de novo pathway; CTP from UDP: step 2/2. Allosterically activated by GTP, when glutamine is the substrate; GTP has no effect on the reaction when ammonia is the substrate. The allosteric effector GTP functions by stabilizing the protein conformation that binds the tetrahedral intermediate(s) formed during glutamine hydrolysis. Inhibited by the product CTP, via allosteric rather than competitive inhibition. Catalyzes the ATP-dependent amination of UTP to CTP with either L-glutamine or ammonia as the source of nitrogen. Regulates intracellular CTP levels through interactions with the four ribonucleotide triphosphates. In Pseudomonas putida (strain ATCC 700007 / DSM 6899 / JCM 31910 / BCRC 17059 / LMG 24140 / F1), this protein is CTP synthase.